The chain runs to 436 residues: Carboxypeptidase A5 (436 aa).

Residues 1 to 33 (MQGTPGGGTRPGPSPVDRRTLLVFSFILAAALG) form the signal peptide. The propeptide at 34 to 126 (QMNFTGDQVL…ERQAMAKSRR (93 aa)) is activation peptide. One can recognise a Peptidase M14 domain in the interval 138-431 (SYHTLEEIYS…MALRTIMEHT (294 aa)). Histidine 196 and glutamate 199 together coordinate Zn(2+). Residues 196–199 (HSRE), arginine 254, and 271–272 (NR) each bind substrate. A disulfide bond links cysteine 265 and cysteine 288. Histidine 323 serves as a coordination point for Zn(2+). Substrate contacts are provided by residues 324–325 (SY) and tyrosine 375. Catalysis depends on glutamate 397, which acts as the Proton donor/acceptor.

The protein belongs to the peptidase M14 family. Zn(2+) serves as cofactor. Expression is very low or not detectable.

It is found in the secreted. This chain is Carboxypeptidase A5 (CPA5), found in Homo sapiens (Human).